Reading from the N-terminus, the 178-residue chain is ATP synthase subunit b, chloroplastic (178 aa).

The chain crosses the membrane as a helical span at residues Ile-23–Gly-43.

The protein belongs to the ATPase B chain family. F-type ATPases have 2 components, F(1) - the catalytic core - and F(0) - the membrane proton channel. F(1) has five subunits: alpha(3), beta(3), gamma(1), delta(1), epsilon(1). F(0) has four main subunits: a(1), b(1), b'(1) and c(10-14). The alpha and beta chains form an alternating ring which encloses part of the gamma chain. F(1) is attached to F(0) by a central stalk formed by the gamma and epsilon chains, while a peripheral stalk is formed by the delta, b and b' chains.

It localises to the plastid. The protein resides in the chloroplast thylakoid membrane. Its function is as follows. F(1)F(0) ATP synthase produces ATP from ADP in the presence of a proton or sodium gradient. F-type ATPases consist of two structural domains, F(1) containing the extramembraneous catalytic core and F(0) containing the membrane proton channel, linked together by a central stalk and a peripheral stalk. During catalysis, ATP synthesis in the catalytic domain of F(1) is coupled via a rotary mechanism of the central stalk subunits to proton translocation. Functionally, component of the F(0) channel, it forms part of the peripheral stalk, linking F(1) to F(0). In Tetradesmus obliquus (Green alga), this protein is ATP synthase subunit b, chloroplastic.